The chain runs to 366 residues: tRNA 2-selenouridine synthase (366 aa).

The Rhodanese domain occupies 12–135 (FLNDVPMMDA…MRTFLLDTLH (124 aa)). Residue cysteine 95 is the S-selanylcysteine intermediate of the active site.

It belongs to the SelU family. As to quaternary structure, monomer.

It catalyses the reaction 5-methylaminomethyl-2-thiouridine(34) in tRNA + selenophosphate + (2E)-geranyl diphosphate + H2O + H(+) = 5-methylaminomethyl-2-selenouridine(34) in tRNA + (2E)-thiogeraniol + phosphate + diphosphate. The enzyme catalyses 5-methylaminomethyl-2-thiouridine(34) in tRNA + (2E)-geranyl diphosphate = 5-methylaminomethyl-S-(2E)-geranyl-thiouridine(34) in tRNA + diphosphate. The catalysed reaction is 5-methylaminomethyl-S-(2E)-geranyl-thiouridine(34) in tRNA + selenophosphate + H(+) = 5-methylaminomethyl-2-(Se-phospho)selenouridine(34) in tRNA + (2E)-thiogeraniol. It carries out the reaction 5-methylaminomethyl-2-(Se-phospho)selenouridine(34) in tRNA + H2O = 5-methylaminomethyl-2-selenouridine(34) in tRNA + phosphate. Involved in the post-transcriptional modification of the uridine at the wobble position (U34) of tRNA(Lys), tRNA(Glu) and tRNA(Gln). Catalyzes the conversion of 2-thiouridine (S2U-RNA) to 2-selenouridine (Se2U-RNA). Acts in a two-step process involving geranylation of 2-thiouridine (S2U) to S-geranyl-2-thiouridine (geS2U) and subsequent selenation of the latter derivative to 2-selenouridine (Se2U) in the tRNA chain. This chain is tRNA 2-selenouridine synthase, found in Pseudomonas savastanoi pv. phaseolicola (strain 1448A / Race 6) (Pseudomonas syringae pv. phaseolicola (strain 1448A / Race 6)).